We begin with the raw amino-acid sequence, 388 residues long: Staphopain A (388 aa).

An N-terminal signal peptide occupies residues Met1–Ala25. A propeptide spanning residues Glu26 to Thr214 is cleaved from the precursor. Catalysis depends on residues Cys238, His334, and Asn355.

This sequence belongs to the peptidase C47 family. In the cytoplasm, prematurely activated/folded ScpA forms a stable non-covalent complex with ScpB. Cleavage leads to the activation of ScpA probably by an auto-catalytic manner.

Its subcellular location is the secreted. The catalysed reaction is Broad endopeptidase action on proteins including elastin, but rather limited hydrolysis of small-molecule substrates. Assays are conveniently made with hemoglobin, casein or Z-Phe-Arg-NHMec as substrate.. With respect to regulation, prematurely activated/folded staphopain A is inhibited by staphostatin A (ScpB), which is probably required to protect staphylococcal cytoplasmic proteins from degradation by ScpA. Functionally, cysteine protease that plays an important role in the inhibition of host innate immune response. Cleaves host elastins found in connective tissues, pulmonary surfactant protein A in the lungs, and the chemokine receptor CXCR2 on leukocytes. Proteolytic cleavage of surfactant protein A impairs bacterial phagocytosis by neutrophils while CXCR2 degradation blocks neutrophil activation and chemotaxis. Additionally, promotes vascular leakage by activating the plasma kallikerin/kinin system, resulting in hypotension. This chain is Staphopain A (sspP), found in Staphylococcus aureus (strain MRSA252).